The sequence spans 1172 residues: Lysylphosphatidylglycerol biosynthesis bifunctional protein LysX (1172 aa).

Residues 1-34 (MGLHLTVPGLRRDGRGVQSNSHDTSSKTTADISR) are disordered. The phosphatidylglycerol lysyltransferase stretch occupies residues 1-663 (MGLHLTVPGL…LLHHDGSAPD (663 aa)). The span at 17–31 (VQSNSHDTSSKTTAD) shows a compositional bias: polar residues. The next 7 membrane-spanning stretches (helical) occupy residues 80–100 (VPAAAGWTVGVIATLSLLASV), 122–142 (FPDTNFAWSFVLALLAAALTA), 146–166 (IAWLVLLANMVLAAVVNAAEI), 177–197 (FGENLGFAVHVVAIVVLVLGY), 214–234 (AVWLAGAVVGIVASWGLVELF), 272–292 (AIFGLFGAFALIGAAIVLFLS), and 612–632 (VIPRVGVASVIAEGFLVLPFS). A lysine--tRNA ligase region spans residues 664–1172 (VSGLRQVGLT…TLPFPLAKPH (509 aa)). Positions 726 to 804 (VSVSGRIMRI…SLIVSGWRLI (79 aa)) form a DNA-binding region, OB. Mg(2+) is bound by residues Asp-1084 and Glu-1091.

This sequence in the N-terminal section; belongs to the LPG synthetase family. It in the C-terminal section; belongs to the class-II aminoacyl-tRNA synthetase family. Mg(2+) serves as cofactor.

The protein resides in the cell membrane. It catalyses the reaction tRNA(Lys) + L-lysine + ATP = L-lysyl-tRNA(Lys) + AMP + diphosphate. The catalysed reaction is L-lysyl-tRNA(Lys) + a 1,2-diacyl-sn-glycero-3-phospho-(1'-sn-glycerol) = a 1,2-diacyl-sn-glycero-3-phospho-1'-(3'-O-L-lysyl)-sn-glycerol + tRNA(Lys). Catalyzes the production of L-lysyl-tRNA(Lys)transfer and the transfer of a lysyl group from L-lysyl-tRNA(Lys) to membrane-bound phosphatidylglycerol (PG), which produces lysylphosphatidylglycerol (LPG), one of the components of the bacterial membrane with a positive net charge. LPG synthesis contributes to the resistance to cationic antimicrobial peptides (CAMPs) and likely protects M.tuberculosis against the CAMPs produced by competiting microorganisms (bacteriocins). In fact, the modification of anionic phosphatidylglycerol with positively charged L-lysine results in repulsion of the peptides. This chain is Lysylphosphatidylglycerol biosynthesis bifunctional protein LysX (lysX), found in Mycobacterium bovis (strain BCG / Pasteur 1173P2).